A 465-amino-acid chain; its full sequence is Argininosuccinate lyase (465 aa).

It belongs to the lyase 1 family. Argininosuccinate lyase subfamily.

It localises to the cytoplasm. The enzyme catalyses 2-(N(omega)-L-arginino)succinate = fumarate + L-arginine. It participates in amino-acid biosynthesis; L-arginine biosynthesis; L-arginine from L-ornithine and carbamoyl phosphate: step 3/3. In Variovorax paradoxus (strain S110), this protein is Argininosuccinate lyase.